The sequence spans 347 residues: Homeobox protein knotted-1-like 9 (347 aa).

Positions 1–17 (MESFASLAGGGSSSTTA) are enriched in low complexity. 3 disordered regions span residues 1–36 (MESF…PPPL), 122–145 (QQLD…DVPD), and 179–206 (DSNC…DPSD). The segment covering 22 to 36 (LIPPENPDRISPPPL) has biased composition (pro residues). Positions 188–203 (SEEEQDTSCPEAEEID) are enriched in acidic residues. An ELK domain is found at 208–228 (QLKHQLLMKYGGSLGDLRQAF). Positions 229-293 (SKRTKKGKLP…NQRKRHWKPT (65 aa)) form a DNA-binding region, homeobox; TALE-type.

This sequence belongs to the TALE/KNOX homeobox family.

Its subcellular location is the nucleus. In Oryza sativa subsp. japonica (Rice), this protein is Homeobox protein knotted-1-like 9.